The primary structure comprises 305 residues: Small ribosomal subunit protein bS1B (305 aa).

3 S1 motif domains span residues 29–98, 116–180, and 194–262; these read GQTV…LSRR, GKTL…LTQR, and GNIY…LSTR.

Belongs to the bacterial ribosomal protein bS1 family.

In terms of biological role, binds mRNA. The protein is Small ribosomal subunit protein bS1B (rps1b) of Synechocystis sp. (strain ATCC 27184 / PCC 6803 / Kazusa).